The chain runs to 100 residues: Large ribosomal subunit protein bL27 (100 aa).

A propeptide spanning residues 1-9 (MIIMNLQIF) is cleaved from the precursor. The segment at 13–32 (KGMGSSKNGRDSESKRLGTK) is disordered.

The protein belongs to the bacterial ribosomal protein bL27 family. Post-translationally, the N-terminus is cleaved by ribosomal processing cysteine protease Prp.

This chain is Large ribosomal subunit protein bL27, found in Clostridium kluyveri (strain ATCC 8527 / DSM 555 / NBRC 12016 / NCIMB 10680 / K1).